Here is a 199-residue protein sequence, read N- to C-terminus: 3-isopropylmalate dehydratase small subunit (199 aa).

The protein belongs to the LeuD family. LeuD type 1 subfamily. Heterodimer of LeuC and LeuD.

The enzyme catalyses (2R,3S)-3-isopropylmalate = (2S)-2-isopropylmalate. Its pathway is amino-acid biosynthesis; L-leucine biosynthesis; L-leucine from 3-methyl-2-oxobutanoate: step 2/4. Functionally, catalyzes the isomerization between 2-isopropylmalate and 3-isopropylmalate, via the formation of 2-isopropylmaleate. The polypeptide is 3-isopropylmalate dehydratase small subunit (Leifsonia xyli subsp. xyli (strain CTCB07)).